The sequence spans 132 residues: MSRHKSKSIPGRNLRLAEQIQKDLAGIIQREIDMTRAGLITLSGVELSADYAHAKVYFTVLGAEPDTAAALLNEKAGWLHSQLYKLLHIHTVPTLRFVHDPQLERGIEMSMLIDRANRGPHSGVPDEPEDQS.

It belongs to the RbfA family. Monomer. Binds 30S ribosomal subunits, but not 50S ribosomal subunits or 70S ribosomes.

The protein resides in the cytoplasm. In terms of biological role, one of several proteins that assist in the late maturation steps of the functional core of the 30S ribosomal subunit. Associates with free 30S ribosomal subunits (but not with 30S subunits that are part of 70S ribosomes or polysomes). Required for efficient processing of 16S rRNA. May interact with the 5'-terminal helix region of 16S rRNA. The polypeptide is Ribosome-binding factor A (Bordetella avium (strain 197N)).